A 1488-amino-acid polypeptide reads, in one-letter code: Indigoidine synthase (1488 aa).

Positions 229–585 (KNRAQRHPEQ…GGDGVARGYL (357 aa)) are adenylation. The 76-residue stretch at 1137 to 1212 (APRNPLEHQV…KLAAWLSRAR (76 aa)) folds into the Carrier domain. At Ser-1172 the chain carries O-(pantetheine 4'-phosphoryl)serine. The thioesterase stretch occupies residues 1230–1346 (PIYCWPGLGG…ERVAAMNRKA (117 aa)).

The protein belongs to the ATP-dependent AMP-binding enzyme family. Pantetheine 4'-phosphate serves as cofactor.

The enzyme catalyses 2 FMN + 2 L-glutamine + 2 ATP + O2 = indigoidine + 2 FMNH2 + 2 AMP + 2 diphosphate + 2 H2O. It catalyses the reaction FMN + L-glutamine + ATP = 3-amino-1,5-dihydropyridine-2,6-dione + FMNH2 + AMP + diphosphate. The catalysed reaction is 2 3-amino-1,5-dihydropyridine-2,6-dione + O2 = indigoidine + 2 H2O. Its pathway is pigment biosynthesis. In terms of biological role, nonribosomal peptide synthetase involved in the biosynthesis of the blue pigment indigoidine, which is implicated in pathogenicity and protection from oxidative stress. Catalyzes the synthesis of the blue pigment using L-Gln as a substrate. Two glutamine molecules are cyclized and oxidized to form indigoidine. In Dickeya dadantii (strain 3937) (Erwinia chrysanthemi (strain 3937)), this protein is Indigoidine synthase.